Consider the following 460-residue polypeptide: Photosystem II CP43 reaction center protein (460 aa).

M1 is a propeptide. A run of 5 helical transmembrane segments spans residues L56–A80, I121–N142, K165–T187, R242–S262, and W278–A299. E354 lines the [CaMn4O5] cluster pocket. Residues R434–P458 form a helical membrane-spanning segment.

This sequence belongs to the PsbB/PsbC family. PsbC subfamily. In terms of assembly, PSII is composed of 1 copy each of membrane proteins PsbA, PsbB, PsbC, PsbD, PsbE, PsbF, PsbH, PsbI, PsbJ, PsbK, PsbL, PsbM, PsbT, PsbY, PsbZ, Psb30/Ycf12, at least 3 peripheral proteins of the oxygen-evolving complex and a large number of cofactors. It forms dimeric complexes. It depends on Binds multiple chlorophylls and provides some of the ligands for the Ca-4Mn-5O cluster of the oxygen-evolving complex. It may also provide a ligand for a Cl- that is required for oxygen evolution. PSII binds additional chlorophylls, carotenoids and specific lipids. as a cofactor.

Its subcellular location is the plastid. The protein localises to the chloroplast thylakoid membrane. Functionally, one of the components of the core complex of photosystem II (PSII). It binds chlorophyll and helps catalyze the primary light-induced photochemical processes of PSII. PSII is a light-driven water:plastoquinone oxidoreductase, using light energy to abstract electrons from H(2)O, generating O(2) and a proton gradient subsequently used for ATP formation. The sequence is that of Photosystem II CP43 reaction center protein from Cyanidium caldarium (Red alga).